Here is a 236-residue protein sequence, read N- to C-terminus: 2,3,4,5-tetrahydropyridine-2,6-dicarboxylate N-acetyltransferase (236 aa).

This sequence belongs to the transferase hexapeptide repeat family. DapH subfamily.

It carries out the reaction (S)-2,3,4,5-tetrahydrodipicolinate + acetyl-CoA + H2O = L-2-acetamido-6-oxoheptanedioate + CoA. It functions in the pathway amino-acid biosynthesis; L-lysine biosynthesis via DAP pathway; LL-2,6-diaminopimelate from (S)-tetrahydrodipicolinate (acetylase route): step 1/3. In terms of biological role, catalyzes the transfer of an acetyl group from acetyl-CoA to tetrahydrodipicolinate. This chain is 2,3,4,5-tetrahydropyridine-2,6-dicarboxylate N-acetyltransferase, found in Clostridium botulinum (strain 657 / Type Ba4).